An 838-amino-acid chain; its full sequence is Sec1 family domain-containing protein MIP3 (838 aa).

Positions 637–677 (KSEETKEIPSDDQLDIDALDDDPWGKWGDEEEEEVDNSKAD) are disordered. Positions 646 to 658 (SDDQLDIDALDDD) are enriched in acidic residues.

Belongs to the STXBP/unc-18/SEC1 family. In terms of assembly, forms a complex with MAG2, ZW10/MIP1 and MIP2 on the endoplasmic reticulum.

Its subcellular location is the endoplasmic reticulum membrane. Required for proper maturation of seed storage proteins. Forms a complex with MAG2, ZW10/MIP1 and MIP2 on the endoplasmic reticulum that may be responsible for efficient transport of seed storage proteins. The sequence is that of Sec1 family domain-containing protein MIP3 from Arabidopsis thaliana (Mouse-ear cress).